We begin with the raw amino-acid sequence, 312 residues long: Phospholipid phosphatase 3 (312 aa).

At M1–R33 the chain is on the cytoplasmic side. S19 bears the Phosphoserine mark. The helical transmembrane segment at V34–I54 threads the bilayer. The Extracellular segment spans residues E55–D85. The helical transmembrane segment at A86–Y106 threads the bilayer. At R107–Y123 the chain is on the cytoplasmic side. A Dityrosine basolateral targeting motif motif is present at residues Y109 to Y110. The chain crosses the membrane as a helical span at residues V124–F144. The Extracellular portion of the chain corresponds to T145–K194. Residues K149–P157 are phosphatase sequence motif I. N-linked (GlcNAc...) asparagine glycosylation occurs at N171. The short motif at R183–E185 is the Integrin-binding motif element. Residues S195 to L215 traverse the membrane as a helical segment. The tract at residues F197 to H200 is phosphatase sequence motif II. Residue H200 is the Proton donors of the active site. The Cytoplasmic portion of the chain corresponds to Q216–L226. Residues L227–L244 traverse the membrane as a helical segment. The segment at S245 to D256 is phosphatase sequence motif III. The Extracellular segment spans residues S245–L258. H252 serves as the catalytic Nucleophile. The chain crosses the membrane as a helical span at residues A259–F279. A mediates interaction with CTNND1 region spans residues S276–V312. Topologically, residues K280–V312 are cytoplasmic.

The protein belongs to the PA-phosphatase related phosphoesterase family. Forms functional homodimers and homooligomers that are not required for substrate recognition and catalytic activity. Can also form heterooligomers with other PLPP2 and PLPP3. Interacts with CTNND1; negatively regulates the PLPP3-mediated stabilization of beta-catenin/CTNNB1. In terms of processing, N-glycosylated. Contains high-mannose oligosaccharides. In terms of tissue distribution, detected in lung, cerebellum and heart atrium.

The protein localises to the cell membrane. It is found in the basolateral cell membrane. Its subcellular location is the endoplasmic reticulum membrane. It localises to the endoplasmic reticulum-Golgi intermediate compartment membrane. The protein resides in the golgi apparatus membrane. The protein localises to the golgi apparatus. It is found in the trans-Golgi network membrane. Its subcellular location is the membrane raft. It carries out the reaction a 1,2-diacyl-sn-glycero-3-phosphate + H2O = a 1,2-diacyl-sn-glycerol + phosphate. The enzyme catalyses 1,2-dihexadecanoyl-sn-glycero-3-phosphate + H2O = 1,2-dihexadecanoyl-sn-glycerol + phosphate. It catalyses the reaction 1,2-di-(9Z-octadecenoyl)-sn-glycero-3-phosphate + H2O = 1,2-di-(9Z-octadecenoyl)-sn-glycerol + phosphate. The catalysed reaction is a monoacyl-sn-glycero-3-phosphate + H2O = a monoacylglycerol + phosphate. It carries out the reaction (9Z)-octadecenoyl-sn-glycero-3-phosphate + H2O = (9Z-octadecenoyl)-glycerol + phosphate. The enzyme catalyses sphing-4-enine 1-phosphate + H2O = sphing-4-enine + phosphate. It catalyses the reaction an N-acylsphing-4-enine 1-phosphate + H2O = an N-acylsphing-4-enine + phosphate. The catalysed reaction is N-(octanoyl)-sphing-4-enine-1-phosphate + H2O = N-octanoylsphing-4-enine + phosphate. It carries out the reaction N-(9Z-octadecenoyl)-ethanolamine phosphate + H2O = N-(9Z-octadecenoyl) ethanolamine + phosphate. It functions in the pathway lipid metabolism; phospholipid metabolism. Its activity is regulated as follows. Magnesium-independent phospholipid phosphatase. Insensitive to N-ethylmaleimide. In terms of biological role, magnesium-independent phospholipid phosphatase of the plasma membrane that catalyzes the dephosphorylation of a variety of glycerolipid and sphingolipid phosphate esters including phosphatidate/PA, lysophosphatidate/LPA, diacylglycerol pyrophosphate/DGPP, sphingosine 1-phosphate/S1P and ceramide 1-phosphate/C1P. Also acts on N-oleoyl ethanolamine phosphate/N-(9Z-octadecenoyl)-ethanolamine phosphate, a potential physiological compound. Has both an extracellular and an intracellular phosphatase activity, allowing the hydrolysis and the cellular uptake of these bioactive lipid mediators from the milieu, regulating signal transduction in different cellular processes. Through the dephosphorylation of extracellular sphingosine-1-phosphate and the regulation of its extra- and intracellular availability, plays a role in vascular homeostasis, regulating endothelial cell migration, adhesion, survival, proliferation and the production of pro-inflammatory cytokines. By maintaining the appropriate levels of this lipid in the cerebellum, also ensure its proper development and function. Through its intracellular lipid phosphatase activity may act in early compartments of the secretory pathway, regulating the formation of Golgi to endoplasmic reticulum retrograde transport carriers. Its function is as follows. Independently of this phosphatase activity may also function in the Wnt signaling pathway and the stabilization of beta-catenin/CTNNB1, thereby regulating cell proliferation, migration and differentiation in angiogenesis or yet in tumor growth. Also plays a role in integrin-mediated cell-cell adhesion in angiogenesis. The sequence is that of Phospholipid phosphatase 3 from Mus musculus (Mouse).